The sequence spans 485 residues: Probable RNA-binding protein 46 (485 aa).

3 RRM domains span residues 61 to 139 (CEVF…VSLD), 141 to 223 (CRLF…WADP), and 236 to 308 (KVLY…LAKP).

As to quaternary structure, interacts with YTHDC2, MEIOC, MOV10, CNOT6L, DDX4, UPF1 and PABPC1.

The protein localises to the cytoplasm. Its function is as follows. Essential for male and female fertility, playing a crucial role in regulating germ cell development by ensuring the proper progression of meiosis prophase I. Regulates mitotic-to-meiotic transition in spermatogenesis by forming a complex with MEIOC and YTHDC2 which recognizes and down-regulates mitotic transcripts for a successful meiotic entry. Required for normal synaptonemal complex formation during meiosis, binding meiotic cohesin subunit mRNAs containing GCCUAU/GUUCGA motifs in their 3'UTRs regions and positively regulating their translation. Required for spermatogonial differentiation in both developing and adult testis. The polypeptide is Probable RNA-binding protein 46 (RBM46) (Macaca fascicularis (Crab-eating macaque)).